Reading from the N-terminus, the 484-residue chain is Malonate-semialdehyde dehydrogenase 2 (484 aa).

Phenylalanine 153, lysine 177, glutamate 180, arginine 181, serine 230, and threonine 252 together coordinate NAD(+). The active-site Nucleophile is cysteine 285. Glutamate 385 is a binding site for NAD(+).

This sequence belongs to the aldehyde dehydrogenase family. IolA subfamily. Homotetramer.

It catalyses the reaction 3-oxopropanoate + NAD(+) + CoA + H2O = hydrogencarbonate + acetyl-CoA + NADH + H(+). It carries out the reaction 2-methyl-3-oxopropanoate + NAD(+) + CoA + H2O = propanoyl-CoA + hydrogencarbonate + NADH + H(+). The protein operates within polyol metabolism; myo-inositol degradation into acetyl-CoA; acetyl-CoA from myo-inositol: step 7/7. In terms of biological role, catalyzes the oxidation of malonate semialdehyde (MSA) and methylmalonate semialdehyde (MMSA) into acetyl-CoA and propanoyl-CoA, respectively. Is involved in a myo-inositol catabolic pathway. Bicarbonate, and not CO2, is the end-product of the enzymatic reaction. In Geobacillus kaustophilus (strain HTA426), this protein is Malonate-semialdehyde dehydrogenase 2.